The primary structure comprises 201 residues: Holliday junction branch migration complex subunit RuvA (201 aa).

Positions 1–63 (MYAYIKGKLS…EDAQLLYGFM (63 aa)) are domain I. The domain II stretch occupies residues 64 to 142 (SEEEKGMFLS…ITEENPETLL (79 aa)). Residues 143–153 (NFEGSESNQTS) form a flexible linker region. A domain III region spans residues 153–201 (SPILDEALLALEALGYSKRELNKVEKKLQAESYTSVDEAVKAGLKILVS).

It belongs to the RuvA family. As to quaternary structure, homotetramer. Forms an RuvA(8)-RuvB(12)-Holliday junction (HJ) complex. HJ DNA is sandwiched between 2 RuvA tetramers; dsDNA enters through RuvA and exits via RuvB. An RuvB hexamer assembles on each DNA strand where it exits the tetramer. Each RuvB hexamer is contacted by two RuvA subunits (via domain III) on 2 adjacent RuvB subunits; this complex drives branch migration. In the full resolvosome a probable DNA-RuvA(4)-RuvB(12)-RuvC(2) complex forms which resolves the HJ.

The protein localises to the cytoplasm. The RuvA-RuvB-RuvC complex processes Holliday junction (HJ) DNA during genetic recombination and DNA repair, while the RuvA-RuvB complex plays an important role in the rescue of blocked DNA replication forks via replication fork reversal (RFR). RuvA specifically binds to HJ cruciform DNA, conferring on it an open structure. The RuvB hexamer acts as an ATP-dependent pump, pulling dsDNA into and through the RuvAB complex. HJ branch migration allows RuvC to scan DNA until it finds its consensus sequence, where it cleaves and resolves the cruciform DNA. The chain is Holliday junction branch migration complex subunit RuvA from Staphylococcus carnosus (strain TM300).